The chain runs to 365 residues: tRNA 2-selenouridine synthase (365 aa).

Residues 15–138 (LVSDHPIMDA…MRQFLIETID (124 aa)) enclose the Rhodanese domain. Residue Cys98 is the S-selanylcysteine intermediate of the active site.

The protein belongs to the SelU family. As to quaternary structure, monomer.

It catalyses the reaction 5-methylaminomethyl-2-thiouridine(34) in tRNA + selenophosphate + (2E)-geranyl diphosphate + H2O + H(+) = 5-methylaminomethyl-2-selenouridine(34) in tRNA + (2E)-thiogeraniol + phosphate + diphosphate. It carries out the reaction 5-methylaminomethyl-2-thiouridine(34) in tRNA + (2E)-geranyl diphosphate = 5-methylaminomethyl-S-(2E)-geranyl-thiouridine(34) in tRNA + diphosphate. The enzyme catalyses 5-methylaminomethyl-S-(2E)-geranyl-thiouridine(34) in tRNA + selenophosphate + H(+) = 5-methylaminomethyl-2-(Se-phospho)selenouridine(34) in tRNA + (2E)-thiogeraniol. The catalysed reaction is 5-methylaminomethyl-2-(Se-phospho)selenouridine(34) in tRNA + H2O = 5-methylaminomethyl-2-selenouridine(34) in tRNA + phosphate. In terms of biological role, involved in the post-transcriptional modification of the uridine at the wobble position (U34) of tRNA(Lys), tRNA(Glu) and tRNA(Gln). Catalyzes the conversion of 2-thiouridine (S2U-RNA) to 2-selenouridine (Se2U-RNA). Acts in a two-step process involving geranylation of 2-thiouridine (S2U) to S-geranyl-2-thiouridine (geS2U) and subsequent selenation of the latter derivative to 2-selenouridine (Se2U) in the tRNA chain. This is tRNA 2-selenouridine synthase from Shewanella piezotolerans (strain WP3 / JCM 13877).